A 93-amino-acid polypeptide reads, in one-letter code: Large ribosomal subunit protein uL23cz/uL23cy (93 aa).

The protein belongs to the universal ribosomal protein uL23 family. Part of the 50S ribosomal subunit.

It is found in the plastid. Its subcellular location is the chloroplast. In terms of biological role, binds to 23S rRNA. The chain is Large ribosomal subunit protein uL23cz/uL23cy (rpl23-A) from Lotus japonicus (Lotus corniculatus var. japonicus).